The primary structure comprises 244 residues: Aspartate/glutamate leucyltransferase (244 aa).

It belongs to the R-transferase family. Bpt subfamily.

It is found in the cytoplasm. It carries out the reaction N-terminal L-glutamyl-[protein] + L-leucyl-tRNA(Leu) = N-terminal L-leucyl-L-glutamyl-[protein] + tRNA(Leu) + H(+). It catalyses the reaction N-terminal L-aspartyl-[protein] + L-leucyl-tRNA(Leu) = N-terminal L-leucyl-L-aspartyl-[protein] + tRNA(Leu) + H(+). In terms of biological role, functions in the N-end rule pathway of protein degradation where it conjugates Leu from its aminoacyl-tRNA to the N-termini of proteins containing an N-terminal aspartate or glutamate. In Bordetella bronchiseptica (strain ATCC BAA-588 / NCTC 13252 / RB50) (Alcaligenes bronchisepticus), this protein is Aspartate/glutamate leucyltransferase.